Reading from the N-terminus, the 433-residue chain is MRAEARGGLERFCSAGKGRGLRALRPFHVGDLLFSCPAYACVLTVGERGHHCECCFARKEGLSKCGRCKQAFYCDVECQKEDWPLHKLECSSMVVFGENWNPSETVRLTARILAKQKMHPERTPSEKLLAVREFESHLDKLDNEKKDLIQSDIAALHQFYSKHLEFPDHSSLVVLFAQVNCNGFTIEDEELSHLGSAIFPDVALMNHSCCPNVIVTYKGTLAEVRAVQEIHPGDEVFTSYIDLLYPTEDRNDRLRDSYFFTCECRECTTKDKDKAKVEIRKLSNPPQAEAIRDMVRYARNVIEEFRRAKHYKSPSELLEICELSQEKMSSVFEDSNVYMLHMMYQAMGVCLYMQDWEGALKYGQKIIKPYSKHYPVYSLNVASMWLKLGRLYMGLENKAAGEKALKKAIAIMEIAHGKDHPYISEIKQEIESH.

One can recognise an SET domain in the interval 7 to 241 (GGLERFCSAG…PGDEVFTSYI (235 aa)). S-adenosyl-L-methionine is bound at residue 17 to 19 (KGR). The Zn(2+) site is built by Cys52, Cys55, Cys65, Cys68, Cys74, Cys78, His86, and Cys90. An MYND-type zinc finger spans residues 52 to 90 (CECCFARKEGLSKCGRCKQAFYCDVECQKEDWPLHKLEC). Residues His137, 206 to 207 (NH), and 258 to 260 (YFF) each bind S-adenosyl-L-methionine. Phosphoserine is present on Ser283.

Belongs to the class V-like SAM-binding methyltransferase superfamily. Interacts with RNA polymerase II and HELZ. Interacts with SIN3A and HDAC1. Interacts (via MYND-type zinc finger) with EPB41L3. Interacts (via SET domain) with p53/TP53. Interacts with RB1 and HSP90AA1.

Its subcellular location is the cytoplasm. The protein resides in the cytosol. It localises to the nucleus. It catalyses the reaction L-lysyl(4)-[histone H3] + 3 S-adenosyl-L-methionine = N(6),N(6),N(6)-trimethyl-L-lysyl(4)-[histone H3] + 3 S-adenosyl-L-homocysteine + 3 H(+). The catalysed reaction is L-lysyl-[protein] + S-adenosyl-L-methionine = N(6)-methyl-L-lysyl-[protein] + S-adenosyl-L-homocysteine + H(+). Its function is as follows. Protein-lysine N-methyltransferase that methylates both histones and non-histone proteins, including p53/TP53 and RB1. Specifically trimethylates histone H3 'Lys-4' (H3K4me3) in vivo. The activity requires interaction with HSP90alpha. Shows even higher methyltransferase activity on p53/TP53. Monomethylates 'Lys-370' of p53/TP53, leading to decreased DNA-binding activity and subsequent transcriptional regulation activity of p53/TP53. Monomethylates RB1 at 'Lys-860'. This chain is N-lysine methyltransferase SMYD2 (Smyd2), found in Rattus norvegicus (Rat).